The sequence spans 475 residues: LEC14B homolog (475 aa).

Residues 1–34 form a disordered region; that stretch reads MSYRTRFGKDNSACDSGNAVEGSGSSKGPNEVSN. Positions 23-33 are enriched in polar residues; the sequence is SGSSKGPNEVS. 5 WD repeats span residues 211–240, 252–283, 299–329, 375–411, and 423–453; these read DEFG…YVYD, AHSS…KVWD, GHLE…QLWD, GHGV…YIYD, and HHEG…ARWE.

The protein belongs to the WD repeat LEC14B family.

This Prunus armeniaca (Apricot) protein is LEC14B homolog.